The following is an 88-amino-acid chain: Small ribosomal subunit protein uS15c (88 aa).

This sequence belongs to the universal ribosomal protein uS15 family. Part of the 30S ribosomal subunit.

The protein localises to the plastid. It is found in the chloroplast. The sequence is that of Small ribosomal subunit protein uS15c (rps15) from Calycanthus floridus var. glaucus (Eastern sweetshrub).